The following is a 223-amino-acid chain: Ribonuclease 3 (223 aa).

An RNase III domain is found at 4-127 (LNRLEEHLGY…LMGAIYLESG (124 aa)). Mg(2+) is bound at residue Glu40. Asp44 is a catalytic residue. Mg(2+) contacts are provided by Asp113 and Glu116. Residue Glu116 is part of the active site. The DRBM domain occupies 154 to 223 (DYKTTLQEIT…AWKVLQGMNI (70 aa)).

Belongs to the ribonuclease III family. In terms of assembly, homodimer. Requires Mg(2+) as cofactor.

It is found in the cytoplasm. It carries out the reaction Endonucleolytic cleavage to 5'-phosphomonoester.. Functionally, digests double-stranded RNA. Involved in the processing of primary rRNA transcript to yield the immediate precursors to the large and small rRNAs (23S and 16S). Processes some mRNAs, and tRNAs when they are encoded in the rRNA operon. Processes pre-crRNA and tracrRNA of type II CRISPR loci if present in the organism. The chain is Ribonuclease 3 from Campylobacter fetus subsp. fetus (strain 82-40).